Consider the following 272-residue polypeptide: Glutamate racemase (272 aa).

Substrate-binding positions include 16–17 (DS) and 48–49 (YG). Cys-79 functions as the Proton donor/acceptor in the catalytic mechanism. 80–81 (NT) contacts substrate. The Proton donor/acceptor role is filled by Cys-191. 192-193 (TH) provides a ligand contact to substrate.

This sequence belongs to the aspartate/glutamate racemases family.

It carries out the reaction L-glutamate = D-glutamate. Its pathway is cell wall biogenesis; peptidoglycan biosynthesis. In terms of biological role, provides the (R)-glutamate required for cell wall biosynthesis. The sequence is that of Glutamate racemase from Chlorobaculum tepidum (strain ATCC 49652 / DSM 12025 / NBRC 103806 / TLS) (Chlorobium tepidum).